We begin with the raw amino-acid sequence, 176 residues long: Tubulin polymerization-promoting protein family member 3 (176 aa).

Residues 126–152 (TDTSKYTGSHKERFDESGKGKGKGGRE) are disordered. Residues 134–152 (SHKERFDESGKGKGKGGRE) are compositionally biased toward basic and acidic residues.

The protein belongs to the TPPP family.

Its subcellular location is the cytoplasm. It localises to the cytoskeleton. In terms of biological role, regulator of microtubule dynamic that has microtubule bundling activity. The protein is Tubulin polymerization-promoting protein family member 3 (tppp3) of Xenopus tropicalis (Western clawed frog).